The chain runs to 223 residues: MKRTKSIRHASFRKNWSARHLTPVALAVATVFMLAGCEKSDETVSLYQNADDCSAANPGKSAECTTAYNNALKEAERTAPKYATREDCVAEFGEGQCQQAPAQAGMAPENQAQAQQSSGSFWMPLMAGYMMGRLMGGGAGFAQQPLFSSKNPASPAYGKYTDATGKNYGAAQPGRTMTVPKTAMAPKPATTTTVTRGGFGESVAKQSTLQRSATGTSSRSMGG.

Over residues 178–195 the composition is skewed to low complexity; the sequence is TVPKTAMAPKPATTTTVT. Positions 178 to 223 are disordered; sequence TVPKTAMAPKPATTTTVTRGGFGESVAKQSTLQRSATGTSSRSMGG. Residues 204 to 223 show a composition bias toward polar residues; it reads AKQSTLQRSATGTSSRSMGG.

This sequence belongs to the UPF0441 family.

In Escherichia coli (strain ATCC 8739 / DSM 1576 / NBRC 3972 / NCIMB 8545 / WDCM 00012 / Crooks), this protein is UPF0441 protein YgiB.